The sequence spans 118 residues: Ribosome-binding factor A (118 aa).

This sequence belongs to the RbfA family. As to quaternary structure, monomer. Binds 30S ribosomal subunits, but not 50S ribosomal subunits or 70S ribosomes.

The protein resides in the cytoplasm. One of several proteins that assist in the late maturation steps of the functional core of the 30S ribosomal subunit. Associates with free 30S ribosomal subunits (but not with 30S subunits that are part of 70S ribosomes or polysomes). Required for efficient processing of 16S rRNA. May interact with the 5'-terminal helix region of 16S rRNA. This is Ribosome-binding factor A from Bacillus cereus (strain AH187).